The primary structure comprises 354 residues: Sulfate permease CysP (354 aa).

A run of 8 helical transmembrane segments spans residues 3 to 23, 40 to 60, 77 to 97, 125 to 145, 164 to 184, 197 to 217, 293 to 313, and 320 to 340; these read LAAI…GAAA, ALIL…GEVV, IVCI…LLGI, LIIV…TYFV, ILGI…GMNN, VLDV…GALL, VWIV…SLFL, and IFIM…TKAI.

The protein belongs to the inorganic phosphate transporter (PiT) (TC 2.A.20) family.

Its subcellular location is the cell membrane. Functionally, involved in the import of sulfate. The sequence is that of Sulfate permease CysP (cysP) from Bacillus subtilis (strain 168).